Consider the following 994-residue polypeptide: Myosin IA heavy chain (994 aa).

The 709-residue stretch at 12-720 folds into the Myosin motor domain; sequence VGVEDLIMLT…PLFLLEDKRN (709 aa). ATP is bound at residue 105 to 112; it reads GESGAGKT. The segment at 574-654 is actin-binding; that stretch reads TFIPTDKKRP…RAGYCYRQTF (81 aa). 2 consecutive IQ domains span residues 723–744 and 745–774; these read LNDL…KWYL and RTLA…QSIS. The 189-residue stretch at 782 to 970 folds into the TH1 domain; sequence RNRQSIKLSK…ANSPSFTAKA (189 aa).

It belongs to the TRAFAC class myosin-kinesin ATPase superfamily. Myosin family. Myosin I heavy chain is single-headed. Dimer of a heavy and a light chain. Inability to self-assemble into filaments.

In terms of biological role, actin-based motor protein, possibly involved in a wide range of motile processes, such as cell movement across a surface, and extension and retraction of pseudopodia or lamellipodia. The chain is Myosin IA heavy chain (myoA) from Dictyostelium discoideum (Social amoeba).